We begin with the raw amino-acid sequence, 543 residues long: ATP synthase subunit alpha (543 aa).

G174–T181 provides a ligand contact to ATP.

The protein belongs to the ATPase alpha/beta chains family. In terms of assembly, F-type ATPases have 2 components, CF(1) - the catalytic core - and CF(0) - the membrane proton channel. CF(1) has five subunits: alpha(3), beta(3), gamma(1), delta(1), epsilon(1). CF(0) has three main subunits: a(1), b(2) and c(9-12). The alpha and beta chains form an alternating ring which encloses part of the gamma chain. CF(1) is attached to CF(0) by a central stalk formed by the gamma and epsilon chains, while a peripheral stalk is formed by the delta and b chains.

The protein localises to the cell membrane. The enzyme catalyses ATP + H2O + 4 H(+)(in) = ADP + phosphate + 5 H(+)(out). Its function is as follows. Produces ATP from ADP in the presence of a proton gradient across the membrane. The alpha chain is a regulatory subunit. In Bifidobacterium longum subsp. infantis (strain ATCC 15697 / DSM 20088 / JCM 1222 / NCTC 11817 / S12), this protein is ATP synthase subunit alpha.